Reading from the N-terminus, the 243-residue chain is tRNA (guanine-N(1)-)-methyltransferase (243 aa).

S-adenosyl-L-methionine contacts are provided by residues G111 and 131-136; that span reads IGDYVL.

The protein belongs to the RNA methyltransferase TrmD family. As to quaternary structure, homodimer.

It is found in the cytoplasm. It carries out the reaction guanosine(37) in tRNA + S-adenosyl-L-methionine = N(1)-methylguanosine(37) in tRNA + S-adenosyl-L-homocysteine + H(+). Its function is as follows. Specifically methylates guanosine-37 in various tRNAs. This Brevibacillus brevis (strain 47 / JCM 6285 / NBRC 100599) protein is tRNA (guanine-N(1)-)-methyltransferase.